The sequence spans 280 residues: Putative pyruvate, phosphate dikinase regulatory protein (280 aa).

An ADP-binding site is contributed by 158 to 165 (GVSRTSKT).

It belongs to the pyruvate, phosphate/water dikinase regulatory protein family. PDRP subfamily.

It catalyses the reaction N(tele)-phospho-L-histidyl/L-threonyl-[pyruvate, phosphate dikinase] + ADP = N(tele)-phospho-L-histidyl/O-phospho-L-threonyl-[pyruvate, phosphate dikinase] + AMP + H(+). The enzyme catalyses N(tele)-phospho-L-histidyl/O-phospho-L-threonyl-[pyruvate, phosphate dikinase] + phosphate + H(+) = N(tele)-phospho-L-histidyl/L-threonyl-[pyruvate, phosphate dikinase] + diphosphate. Its function is as follows. Bifunctional serine/threonine kinase and phosphorylase involved in the regulation of the pyruvate, phosphate dikinase (PPDK) by catalyzing its phosphorylation/dephosphorylation. This is Putative pyruvate, phosphate dikinase regulatory protein from Lactobacillus johnsonii (strain CNCM I-12250 / La1 / NCC 533).